A 125-amino-acid chain; its full sequence is MMCNLLLSFSVLLLSCTHLVAHPVTDTADMTYSGPDSVEEAGGVSPDDFAVSDLNDLLQRAAVVEYSPLLSRENIKVPGQIPKEALRELLLEKPYRLIPPSGLWGSRRQFRKRGGGADCFWKYCV.

The first 21 residues, 1–21 (MMCNLLLSFSVLLLSCTHLVA), serve as a signal peptide directing secretion. Positions 109-111 (QFR) are excised as a propeptide. C119 and C124 are disulfide-bonded.

This sequence belongs to the urotensin-2 family.

The protein localises to the secreted. Functionally, urotensin is found in the teleost caudal neurosecretory system. It has a suggested role in osmoregulation and as a corticotropin-releasing factor. The non-hormonal portion of this precursor may be a urotensin binding protein, urophysin. The sequence is that of Prepro-urotensin II-alpha from Cyprinus carpio (Common carp).